The primary structure comprises 370 residues: ATP synthase gamma chain, chloroplastic (370 aa).

Residues 1-55 constitute a chloroplast transit peptide; it reads MKFFCVAGLLASAAAFQAQPAAFTTYSPAVGGATSNVFSESSSPAHRNRRATIVM. Residue Cys-145 is part of the active site.

The protein belongs to the ATPase gamma chain family. As to quaternary structure, F-type ATPases have 2 components, CF(1) - the catalytic core - and CF(0) - the membrane proton channel. CF(1) has five subunits: alpha(3), beta(3), gamma(1), delta(1), epsilon(1). CF(0) has four main subunits: a, b, b' and c.

It is found in the plastid. Its subcellular location is the chloroplast thylakoid membrane. Produces ATP from ADP in the presence of a proton gradient across the membrane. The gamma chain is believed to be important in regulating ATPase activity and the flow of protons through the CF(0) complex. This is ATP synthase gamma chain, chloroplastic (ATPC) from Trieres chinensis (Marine centric diatom).